Consider the following 103-residue polypeptide: Small ribosomal subunit protein uS10 (103 aa).

Belongs to the universal ribosomal protein uS10 family. Part of the 30S ribosomal subunit.

Its function is as follows. Involved in the binding of tRNA to the ribosomes. In Ralstonia pickettii (strain 12J), this protein is Small ribosomal subunit protein uS10.